A 208-amino-acid chain; its full sequence is Peroxiredoxin (208 aa).

Residues 2 to 156 (PLLGDDFPQL…IVRAVKALQT (155 aa)) form the Thioredoxin domain. Cys-44 (cysteine sulfenic acid (-SOH) intermediate) is an active-site residue. Residue Arg-119 participates in substrate binding.

It belongs to the peroxiredoxin family. Prx6 subfamily. In terms of assembly, homodecamer. Pentamer of dimers that assemble into a ring structure.

The protein resides in the cytoplasm. It carries out the reaction a hydroperoxide + [thioredoxin]-dithiol = an alcohol + [thioredoxin]-disulfide + H2O. Its function is as follows. Thiol-specific peroxidase that catalyzes the reduction of hydrogen peroxide and organic hydroperoxides to water and alcohols, respectively. Plays a role in cell protection against oxidative stress by detoxifying peroxides. This Treponema denticola (strain ATCC 35405 / DSM 14222 / CIP 103919 / JCM 8153 / KCTC 15104) protein is Peroxiredoxin.